Consider the following 215-residue polypeptide: Cytochrome b6 (215 aa).

Residues 32 to 52 traverse the membrane as a helical segment; it reads IFYCLGGITLTCFLVQVATGF. C35 contacts heme c. Residues H86 and H100 each coordinate heme b. A run of 3 helical transmembrane segments spans residues 90-110, 116-136, and 186-206; these read ASMM…TGGF, LTWV…VTGY, and LHTF…FPMI. The heme b site is built by H187 and H202.

Belongs to the cytochrome b family. PetB subfamily. The 4 large subunits of the cytochrome b6-f complex are cytochrome b6, subunit IV (17 kDa polypeptide, PetD), cytochrome f and the Rieske protein, while the 4 small subunits are PetG, PetL, PetM and PetN. The complex functions as a dimer. Heme b is required as a cofactor. It depends on heme c as a cofactor.

It localises to the plastid. The protein resides in the chloroplast thylakoid membrane. Its function is as follows. Component of the cytochrome b6-f complex, which mediates electron transfer between photosystem II (PSII) and photosystem I (PSI), cyclic electron flow around PSI, and state transitions. The protein is Cytochrome b6 of Saccharum hybrid (Sugarcane).